Consider the following 247-residue polypeptide: Adenosylcobinamide-GDP ribazoletransferase (247 aa).

Transmembrane regions (helical) follow at residues 34 to 54, 59 to 79, 113 to 133, 138 to 158, and 194 to 214; these read IITF…VFMA, FGVP…TGGF, GGLA…ELAL, ILAS…LLMY, and VLLP…AIFI.

It belongs to the CobS family. It depends on Mg(2+) as a cofactor.

Its subcellular location is the cell inner membrane. The enzyme catalyses alpha-ribazole + adenosylcob(III)inamide-GDP = adenosylcob(III)alamin + GMP + H(+). It catalyses the reaction alpha-ribazole 5'-phosphate + adenosylcob(III)inamide-GDP = adenosylcob(III)alamin 5'-phosphate + GMP + H(+). Its pathway is cofactor biosynthesis; adenosylcobalamin biosynthesis; adenosylcobalamin from cob(II)yrinate a,c-diamide: step 7/7. In terms of biological role, joins adenosylcobinamide-GDP and alpha-ribazole to generate adenosylcobalamin (Ado-cobalamin). Also synthesizes adenosylcobalamin 5'-phosphate from adenosylcobinamide-GDP and alpha-ribazole 5'-phosphate. The chain is Adenosylcobinamide-GDP ribazoletransferase from Escherichia coli O17:K52:H18 (strain UMN026 / ExPEC).